We begin with the raw amino-acid sequence, 409 residues long: Glycosyltransferase GtfE (409 aa).

It belongs to the glycosyltransferase 28 family.

It functions in the pathway antibiotic biosynthesis; vancomycin biosynthesis. Its function is as follows. D-glucosyltransferase that acts on the aglycone core, transferring D-glucose to the phenolic hydroxyl of OH-Phegly(4) to form a devancoaminyl-vancomycin (DVV) intermediate in the biosynthesis of glycopeptide antibiotic vancomycin. Also able to glycosylate A47934, an antibiotic with a teicoplanin-like heptapeptide, but lacking sugar residues. The polypeptide is Glycosyltransferase GtfE (gtfE) (Amycolatopsis orientalis (Nocardia orientalis)).